A 310-amino-acid chain; its full sequence is Retrotransposon Gag-like protein 4 (310 aa).

The segment at 278 to 295 adopts a CCHC-type zinc-finger fold; sequence QLCLYCSQSGHFTRDCLA.

In terms of biological role, involved in cognitive function in the brain, possibly via the noradrenergic system. The sequence is that of Retrotransposon Gag-like protein 4 from Homo sapiens (Human).